Here is a 379-residue protein sequence, read N- to C-terminus: MTNLRKTHPLMKIINHTFIDLPAPSNFSAWWNFGSLLGICLILQIITGLFLAMHYTADTESAFSSVTHICRDVNYGWMIRYMHANGASMFFICLFIHIGRGMYYGSYLFLETWNIGVILLFTTMATAFMGYVLPWGQMSFWGATVITNLLSAIPYIGTDLVQWIWGGFSVDKATLTRFFAFHFILPFIIMALAAVHLLFLHEKGSNNPTGIDSDSDKIPFHPYYTMKDIMGFLTMFLALLTLVLFYPDALGDPDNYTPANPLVTPPHIKPEWYFLFAYAILRSIPNKLGGVVALMLSILILIFLPMMHTSKQRGMMFRPLSQCMFWILVANLLTLTWIGGQPVEPPFIMIGQLASLSYFLIILIIMPSISLLENKFMKW.

The next 4 membrane-spanning stretches (helical) occupy residues 33–53, 77–98, 113–133, and 178–198; these read FGSL…FLAM, WMIR…FIHI, WNIG…GYVL, and FFAF…VHLL. Heme b-binding residues include histidine 83 and histidine 97. Heme b-binding residues include histidine 182 and histidine 196. A ubiquinone is bound at residue histidine 201. Transmembrane regions (helical) follow at residues 226 to 246, 288 to 308, 320 to 340, and 347 to 367; these read MKDI…VLFY, LGGV…PMMH, LSQC…WIGG, and FIMI…IIMP.

It belongs to the cytochrome b family. In terms of assembly, the cytochrome bc1 complex contains 11 subunits: 3 respiratory subunits (MT-CYB, CYC1 and UQCRFS1), 2 core proteins (UQCRC1 and UQCRC2) and 6 low-molecular weight proteins (UQCRH/QCR6, UQCRB/QCR7, UQCRQ/QCR8, UQCR10/QCR9, UQCR11/QCR10 and a cleavage product of UQCRFS1). This cytochrome bc1 complex then forms a dimer. The cofactor is heme b.

Its subcellular location is the mitochondrion inner membrane. Functionally, component of the ubiquinol-cytochrome c reductase complex (complex III or cytochrome b-c1 complex) that is part of the mitochondrial respiratory chain. The b-c1 complex mediates electron transfer from ubiquinol to cytochrome c. Contributes to the generation of a proton gradient across the mitochondrial membrane that is then used for ATP synthesis. This Massoutiera mzabi (Mzab gundi) protein is Cytochrome b (MT-CYB).